The following is a 445-amino-acid chain: Exodeoxyribonuclease 7 large subunit (445 aa).

This sequence belongs to the XseA family. Heterooligomer composed of large and small subunits.

The protein localises to the cytoplasm. It catalyses the reaction Exonucleolytic cleavage in either 5'- to 3'- or 3'- to 5'-direction to yield nucleoside 5'-phosphates.. In terms of biological role, bidirectionally degrades single-stranded DNA into large acid-insoluble oligonucleotides, which are then degraded further into small acid-soluble oligonucleotides. The sequence is that of Exodeoxyribonuclease 7 large subunit from Shewanella oneidensis (strain ATCC 700550 / JCM 31522 / CIP 106686 / LMG 19005 / NCIMB 14063 / MR-1).